The sequence spans 306 residues: Acetylglutamate kinase (306 aa).

Residues 75 to 76 (GG), Arg-97, and Asn-197 contribute to the substrate site.

Belongs to the acetylglutamate kinase family. ArgB subfamily.

It localises to the cytoplasm. The catalysed reaction is N-acetyl-L-glutamate + ATP = N-acetyl-L-glutamyl 5-phosphate + ADP. The protein operates within amino-acid biosynthesis; L-arginine biosynthesis; N(2)-acetyl-L-ornithine from L-glutamate: step 2/4. In terms of biological role, catalyzes the ATP-dependent phosphorylation of N-acetyl-L-glutamate. The protein is Acetylglutamate kinase of Streptomyces coelicolor (strain ATCC BAA-471 / A3(2) / M145).